Consider the following 943-residue polypeptide: Isoleucine--tRNA ligase (943 aa).

The 'HIGH' region signature appears at Pro-58–His-68. Position 567 (Glu-567) interacts with L-isoleucyl-5'-AMP. The 'KMSKS' region motif lies at Lys-608–Ser-612. Lys-611 provides a ligand contact to ATP. Zn(2+)-binding residues include Cys-906, Cys-909, Cys-926, and Cys-929.

This sequence belongs to the class-I aminoacyl-tRNA synthetase family. IleS type 1 subfamily. In terms of assembly, monomer. Zn(2+) serves as cofactor.

It localises to the cytoplasm. The catalysed reaction is tRNA(Ile) + L-isoleucine + ATP = L-isoleucyl-tRNA(Ile) + AMP + diphosphate. In terms of biological role, catalyzes the attachment of isoleucine to tRNA(Ile). As IleRS can inadvertently accommodate and process structurally similar amino acids such as valine, to avoid such errors it has two additional distinct tRNA(Ile)-dependent editing activities. One activity is designated as 'pretransfer' editing and involves the hydrolysis of activated Val-AMP. The other activity is designated 'posttransfer' editing and involves deacylation of mischarged Val-tRNA(Ile). The protein is Isoleucine--tRNA ligase of Pseudomonas aeruginosa (strain UCBPP-PA14).